A 497-amino-acid chain; its full sequence is Glycerol kinase (497 aa).

ADP is bound at residue T12. ATP is bound by residues T12, T13, and S14. A sn-glycerol 3-phosphate-binding site is contributed by T12. R16 is a binding site for ADP. The sn-glycerol 3-phosphate site is built by R82, E83, Y134, and D243. Glycerol contacts are provided by R82, E83, Y134, D243, and Q244. T265 and G308 together coordinate ADP. 4 residues coordinate ATP: T265, G308, Q312, and G409. 2 residues coordinate ADP: G409 and N413.

The protein belongs to the FGGY kinase family. Homotetramer and homodimer (in equilibrium).

It catalyses the reaction glycerol + ATP = sn-glycerol 3-phosphate + ADP + H(+). It participates in polyol metabolism; glycerol degradation via glycerol kinase pathway; sn-glycerol 3-phosphate from glycerol: step 1/1. Activated by phosphorylation and inhibited by fructose 1,6-bisphosphate (FBP). In terms of biological role, key enzyme in the regulation of glycerol uptake and metabolism. Catalyzes the phosphorylation of glycerol to yield sn-glycerol 3-phosphate. This chain is Glycerol kinase, found in Caldanaerobacter subterraneus subsp. tengcongensis (strain DSM 15242 / JCM 11007 / NBRC 100824 / MB4) (Thermoanaerobacter tengcongensis).